The sequence spans 277 residues: 4-hydroxy-3-methylbut-2-enyl diphosphate reductase (277 aa).

A [4Fe-4S] cluster-binding site is contributed by Cys-12. The (2E)-4-hydroxy-3-methylbut-2-enyl diphosphate site is built by His-36 and His-70. Residues His-36 and His-70 each coordinate dimethylallyl diphosphate. 2 residues coordinate isopentenyl diphosphate: His-36 and His-70. Cys-92 is a [4Fe-4S] cluster binding site. His-120 provides a ligand contact to (2E)-4-hydroxy-3-methylbut-2-enyl diphosphate. His-120 provides a ligand contact to dimethylallyl diphosphate. His-120 contributes to the isopentenyl diphosphate binding site. Glu-122 serves as the catalytic Proton donor. Thr-158 contacts (2E)-4-hydroxy-3-methylbut-2-enyl diphosphate. Cys-186 is a binding site for [4Fe-4S] cluster. The (2E)-4-hydroxy-3-methylbut-2-enyl diphosphate site is built by Ser-214, Asn-216, and Ser-258. Dimethylallyl diphosphate is bound by residues Ser-214, Asn-216, and Ser-258. Isopentenyl diphosphate-binding residues include Ser-214, Asn-216, and Ser-258.

It belongs to the IspH family. The cofactor is [4Fe-4S] cluster.

It carries out the reaction isopentenyl diphosphate + 2 oxidized [2Fe-2S]-[ferredoxin] + H2O = (2E)-4-hydroxy-3-methylbut-2-enyl diphosphate + 2 reduced [2Fe-2S]-[ferredoxin] + 2 H(+). The catalysed reaction is dimethylallyl diphosphate + 2 oxidized [2Fe-2S]-[ferredoxin] + H2O = (2E)-4-hydroxy-3-methylbut-2-enyl diphosphate + 2 reduced [2Fe-2S]-[ferredoxin] + 2 H(+). Its pathway is isoprenoid biosynthesis; dimethylallyl diphosphate biosynthesis; dimethylallyl diphosphate from (2E)-4-hydroxy-3-methylbutenyl diphosphate: step 1/1. It functions in the pathway isoprenoid biosynthesis; isopentenyl diphosphate biosynthesis via DXP pathway; isopentenyl diphosphate from 1-deoxy-D-xylulose 5-phosphate: step 6/6. Its function is as follows. Catalyzes the conversion of 1-hydroxy-2-methyl-2-(E)-butenyl 4-diphosphate (HMBPP) into a mixture of isopentenyl diphosphate (IPP) and dimethylallyl diphosphate (DMAPP). Acts in the terminal step of the DOXP/MEP pathway for isoprenoid precursor biosynthesis. The sequence is that of 4-hydroxy-3-methylbut-2-enyl diphosphate reductase from Campylobacter jejuni subsp. jejuni serotype O:2 (strain ATCC 700819 / NCTC 11168).